The following is a 707-amino-acid chain: Ornithine decarboxylase (707 aa).

The interval 83 to 102 is disordered; that stretch reads NRNPLSRADSAAGREETAQT. K288 bears the N6-(pyridoxal phosphate)lysine mark. Pyridoxal 5'-phosphate-binding positions include S421, G458, and 498-501; that span reads EPGR. 561–562 serves as a coordination point for substrate; the sequence is FD. Residue C634 is the Proton donor; shared with dimeric partner of the active site. Position 635 (D635) interacts with substrate. A pyridoxal 5'-phosphate-binding site is contributed by Y663.

Belongs to the Orn/Lys/Arg decarboxylase class-II family. In terms of assembly, homodimer. Only the dimer is catalytically active, as the active sites are constructed of residues from both monomers. It depends on pyridoxal 5'-phosphate as a cofactor.

It carries out the reaction L-ornithine + H(+) = putrescine + CO2. The protein operates within amine and polyamine biosynthesis; putrescine biosynthesis via L-ornithine pathway; putrescine from L-ornithine: step 1/1. Its activity is regulated as follows. Inhibited by antizyme (AZ) in response to polyamine levels. AZ inhibits the assembly of the functional homodimer by binding to ODC monomers and targeting them for ubiquitin-independent proteolytic destruction by the 26S proteasome. Inhibited by 1-amino-oxy-3-aminopropane (APA, an isosteric analog of putrescine). Irreversibly inhibited by alpha-difluoromethylornithine (DFMO, a curative agent of West African sleeping sickness). In terms of biological role, catalyzes the first and rate-limiting step of polyamine biosynthesis that converts ornithine into putrescine, which is the precursor for the polyamines, spermidine and spermine. Polyamines are essential for cell proliferation and are implicated in cellular processes, ranging from DNA replication to apoptosis. This chain is Ornithine decarboxylase, found in Leishmania donovani.